Here is an 89-residue protein sequence, read N- to C-terminus: Small ribosomal subunit protein uS15 (89 aa).

The protein belongs to the universal ribosomal protein uS15 family. Part of the 30S ribosomal subunit. Forms a bridge to the 50S subunit in the 70S ribosome, contacting the 23S rRNA.

Its function is as follows. One of the primary rRNA binding proteins, it binds directly to 16S rRNA where it helps nucleate assembly of the platform of the 30S subunit by binding and bridging several RNA helices of the 16S rRNA. In terms of biological role, forms an intersubunit bridge (bridge B4) with the 23S rRNA of the 50S subunit in the ribosome. This Actinobacillus pleuropneumoniae serotype 5b (strain L20) protein is Small ribosomal subunit protein uS15.